The following is a 64-amino-acid chain: Large ribosomal subunit protein bL35 (64 aa).

Belongs to the bacterial ribosomal protein bL35 family.

This is Large ribosomal subunit protein bL35 from Chlorobium chlorochromatii (strain CaD3).